The sequence spans 240 residues: tRNA (guanine-N(7)-)-methyltransferase (240 aa).

Residues 1–20 (MTESHDTPITSDGEARPHRR) form a disordered region. 4 residues coordinate S-adenosyl-L-methionine: Glu-70, Glu-95, Asp-122, and Asp-145. Residue Asp-145 is part of the active site. Residues Lys-149, Asp-181, and 218–221 (TKFE) each bind substrate.

Belongs to the class I-like SAM-binding methyltransferase superfamily. TrmB family.

It carries out the reaction guanosine(46) in tRNA + S-adenosyl-L-methionine = N(7)-methylguanosine(46) in tRNA + S-adenosyl-L-homocysteine. The protein operates within tRNA modification; N(7)-methylguanine-tRNA biosynthesis. Its function is as follows. Catalyzes the formation of N(7)-methylguanine at position 46 (m7G46) in tRNA. The protein is tRNA (guanine-N(7)-)-methyltransferase of Pseudomonas putida (strain ATCC 700007 / DSM 6899 / JCM 31910 / BCRC 17059 / LMG 24140 / F1).